Here is a 123-residue protein sequence, read N- to C-terminus: uncharacterized protein (123 aa).

A run of 3 helical transmembrane segments spans residues 7–29, 44–66, and 79–101; these read VKHL…FDAV, FFIH…VHRI, and LGLY…AAMA.

It localises to the cell membrane. This is an uncharacterized protein from Bacillus subtilis (strain 168).